Reading from the N-terminus, the 110-residue chain is UPF0060 membrane protein Psyc_0916 (110 aa).

The next 4 membrane-spanning stretches (helical) occupy residues 7 to 27 (VGLF…PYLW), 33 to 53 (SIWL…LLSL), 63 to 83 (AAYG…VNGI), and 87 to 107 (TWDI…MFAP).

Belongs to the UPF0060 family.

Its subcellular location is the cell inner membrane. This chain is UPF0060 membrane protein Psyc_0916, found in Psychrobacter arcticus (strain DSM 17307 / VKM B-2377 / 273-4).